We begin with the raw amino-acid sequence, 83 residues long: Protein midgut expression 1 (83 aa).

In terms of tissue distribution, endoderm-specific pattern of expression during embryogenesis; anterior and posterior midgut primordia.

Involved in morphogenesis and development. The polypeptide is Protein midgut expression 1 (mex1) (Drosophila melanogaster (Fruit fly)).